The primary structure comprises 434 residues: Alpha-enolase (434 aa).

Ser40 serves as a coordination point for Mg(2+). Residues His158 and Glu167 each contribute to the substrate site. The active-site Proton donor is the Glu210. Residues Asp245, Glu293, and Asp318 each contribute to the Mg(2+) site. Substrate-binding positions include Glu293, Asp318, 370–373, and Lys394; that span reads SHRS.

Belongs to the enolase family. As to quaternary structure, homodimer. The cofactor is Mg(2+).

It localises to the cytoplasm. The catalysed reaction is (2R)-2-phosphoglycerate = phosphoenolpyruvate + H2O. The protein operates within carbohydrate degradation; glycolysis; pyruvate from D-glyceraldehyde 3-phosphate: step 4/5. The protein is Alpha-enolase of Trachemys scripta elegans (Red-eared slider turtle).